The chain runs to 228 residues: MLVVIPQVLNAEQVGAVRERLEHAGEAWVDGRVTAGYSGAPVKFNQQIDERSDVALECQRLILGMLERNPRFISAALPNIVYPPMFNRYSEGMTFGAHVDGSVRIHPHDGRKLRTDISATLFLSPHDSYDGGELQVQDTYGMHSVKLDAGDMVVYPATSLHQVTPITRGTRVASFFWIQSLIRDDTQRSLLFDMDNAIQRLNQTGADEEARRTLVGCYHNLLRQWSET.

Residues Ile-80 to Ser-180 enclose the Fe2OG dioxygenase domain. Residues His-98, Asp-100, and His-161 each contribute to the Fe cation site. A 2-oxoglutarate-binding site is contributed by Arg-171.

The cofactor is Fe(2+). L-ascorbate is required as a cofactor.

This Cupriavidus pinatubonensis (strain JMP 134 / LMG 1197) (Cupriavidus necator (strain JMP 134)) protein is PKHD-type hydroxylase Reut_A2877.